A 1323-amino-acid chain; its full sequence is Phosphoribosylformylglycinamidine synthase (1323 aa).

ATP contacts are provided by residues 312-323, 391-393, and Ala-691; these read GAATGSGGEIRD and NGY. Mg(2+) contacts are provided by Asp-692, Glu-733, Asn-737, and Asp-903. Ser-905 is a binding site for ATP. The Glutamine amidotransferase type-1 domain occupies 1062 to 1306; the sequence is VAILREQGVN…YPHSKASEWG (245 aa). The Nucleophile role is filled by Cys-1156. Residues His-1284 and Glu-1286 contribute to the active site.

The protein in the N-terminal section; belongs to the FGAMS family.

Its subcellular location is the cytoplasm. The enzyme catalyses N(2)-formyl-N(1)-(5-phospho-beta-D-ribosyl)glycinamide + L-glutamine + ATP + H2O = 2-formamido-N(1)-(5-O-phospho-beta-D-ribosyl)acetamidine + L-glutamate + ADP + phosphate + H(+). The protein operates within purine metabolism; IMP biosynthesis via de novo pathway; 5-amino-1-(5-phospho-D-ribosyl)imidazole from N(2)-formyl-N(1)-(5-phospho-D-ribosyl)glycinamide: step 1/2. Its function is as follows. Phosphoribosylformylglycinamidine synthase involved in the purines biosynthetic pathway. Catalyzes the ATP-dependent conversion of formylglycinamide ribonucleotide (FGAR) and glutamine to yield formylglycinamidine ribonucleotide (FGAM) and glutamate. The chain is Phosphoribosylformylglycinamidine synthase (ade3) from Schizosaccharomyces pombe (strain 972 / ATCC 24843) (Fission yeast).